The chain runs to 369 residues: UDP-3-O-acylglucosamine N-acyltransferase (369 aa).

Catalysis depends on His-263, which acts as the Proton acceptor.

It belongs to the transferase hexapeptide repeat family. LpxD subfamily. As to quaternary structure, homotrimer.

The catalysed reaction is a UDP-3-O-[(3R)-3-hydroxyacyl]-alpha-D-glucosamine + a (3R)-hydroxyacyl-[ACP] = a UDP-2-N,3-O-bis[(3R)-3-hydroxyacyl]-alpha-D-glucosamine + holo-[ACP] + H(+). It participates in bacterial outer membrane biogenesis; LPS lipid A biosynthesis. Its function is as follows. Catalyzes the N-acylation of UDP-3-O-acylglucosamine using 3-hydroxyacyl-ACP as the acyl donor. Is involved in the biosynthesis of lipid A, a phosphorylated glycolipid that anchors the lipopolysaccharide to the outer membrane of the cell. This is UDP-3-O-acylglucosamine N-acyltransferase from Burkholderia ambifaria (strain MC40-6).